Here is a 57-residue protein sequence, read N- to C-terminus: Protein CgkB (57 aa).

The sequence is that of Protein CgkB (cgkB) from Pseudoalteromonas carrageenovora (Alteromonas carrageenovora).